Here is a 113-residue protein sequence, read N- to C-terminus: Transcriptional regulator RamA (113 aa).

Positions 9 to 107 (DTIVEWIDDN…NQPPGAYRKE (99 aa)) constitute an HTH araC/xylS-type domain. DNA-binding regions (H-T-H motif) lie at residues 26-47 (DDIA…LQYK) and 74-97 (VYDI…TRTF).

Monomer. Interacts with the C-terminus of RNAP subunit RpoA when part of class I or class II promoter complexes. Also interacts with sigma-70/RpoD in class II promoter complexes.

In terms of biological role, transcriptional regulator. Binds to regulatory regions of target genes, including its own gene, efflux pump operon acrAB, antisense RNA gene micF, and various genes involved in lipid A biosynthesis, including lpxO and lpxL-2. Regulates expression of many genes, perhaps including its own; activates various lipid A biosynthetic genes, and as a result of activating acrAB, confers multidrug resistance. Plays a role in virulence and survival in host cells. This chain is Transcriptional regulator RamA, found in Klebsiella pneumoniae subsp. pneumoniae (strain HS11286).